The following is a 293-amino-acid chain: Lipoyl synthase (293 aa).

[4Fe-4S] cluster is bound by residues Cys-38, Cys-43, Cys-49, Cys-64, Cys-68, Cys-71, and Ser-277. The 217-residue stretch at 50–266 folds into the Radical SAM core domain; the sequence is WSRGTATFLL…STIAKNAGIR (217 aa).

This sequence belongs to the radical SAM superfamily. Lipoyl synthase family. The cofactor is [4Fe-4S] cluster.

The protein resides in the cytoplasm. The catalysed reaction is [[Fe-S] cluster scaffold protein carrying a second [4Fe-4S](2+) cluster] + N(6)-octanoyl-L-lysyl-[protein] + 2 oxidized [2Fe-2S]-[ferredoxin] + 2 S-adenosyl-L-methionine + 4 H(+) = [[Fe-S] cluster scaffold protein] + N(6)-[(R)-dihydrolipoyl]-L-lysyl-[protein] + 4 Fe(3+) + 2 hydrogen sulfide + 2 5'-deoxyadenosine + 2 L-methionine + 2 reduced [2Fe-2S]-[ferredoxin]. The protein operates within protein modification; protein lipoylation via endogenous pathway; protein N(6)-(lipoyl)lysine from octanoyl-[acyl-carrier-protein]: step 2/2. Catalyzes the radical-mediated insertion of two sulfur atoms into the C-6 and C-8 positions of the octanoyl moiety bound to the lipoyl domains of lipoate-dependent enzymes, thereby converting the octanoylated domains into lipoylated derivatives. This chain is Lipoyl synthase, found in Chlorobium chlorochromatii (strain CaD3).